Here is a 401-residue protein sequence, read N- to C-terminus: Argininosuccinate synthase (401 aa).

Residues 10-18 (AYSGGVDTS) and A38 contribute to the ATP site. Y89 contacts L-citrulline. G119 lines the ATP pocket. Positions 121, 125, and 126 each coordinate L-aspartate. Position 125 (N125) interacts with L-citrulline. R129, S177, S186, E262, and Y274 together coordinate L-citrulline.

It belongs to the argininosuccinate synthase family. Type 1 subfamily. As to quaternary structure, homotetramer.

It is found in the cytoplasm. It carries out the reaction L-citrulline + L-aspartate + ATP = 2-(N(omega)-L-arginino)succinate + AMP + diphosphate + H(+). It functions in the pathway amino-acid biosynthesis; L-arginine biosynthesis; L-arginine from L-ornithine and carbamoyl phosphate: step 2/3. The chain is Argininosuccinate synthase from Synechococcus sp. (strain CC9311).